Reading from the N-terminus, the 352-residue chain is Molybdenum import ATP-binding protein ModC (352 aa).

The 229-residue stretch at 1-229 (MLQLDFHQQL…SALRPWLPKD (229 aa)) folds into the ABC transporter domain. Residue 31–38 (GVSGAGKT) participates in ATP binding. The 64-residue stretch at 289 to 352 (KSSIRNVLRA…AQIKSVSITA (64 aa)) folds into the Mop domain.

This sequence belongs to the ABC transporter superfamily. Molybdate importer (TC 3.A.1.8) family. The complex is composed of two ATP-binding proteins (ModC), two transmembrane proteins (ModB) and a solute-binding protein (ModA).

The protein resides in the cell inner membrane. The catalysed reaction is molybdate(out) + ATP + H2O = molybdate(in) + ADP + phosphate + H(+). In terms of biological role, part of the ABC transporter complex ModABC involved in molybdenum import. Responsible for energy coupling to the transport system. This is Molybdenum import ATP-binding protein ModC from Pectobacterium atrosepticum (strain SCRI 1043 / ATCC BAA-672) (Erwinia carotovora subsp. atroseptica).